The chain runs to 271 residues: Putative phosphoenolpyruvate synthase regulatory protein (271 aa).

Residue 152–159 (GVSRCGKT) participates in ADP binding.

It belongs to the pyruvate, phosphate/water dikinase regulatory protein family. PSRP subfamily.

The catalysed reaction is [pyruvate, water dikinase] + ADP = [pyruvate, water dikinase]-phosphate + AMP + H(+). It carries out the reaction [pyruvate, water dikinase]-phosphate + phosphate + H(+) = [pyruvate, water dikinase] + diphosphate. Its function is as follows. Bifunctional serine/threonine kinase and phosphorylase involved in the regulation of the phosphoenolpyruvate synthase (PEPS) by catalyzing its phosphorylation/dephosphorylation. The sequence is that of Putative phosphoenolpyruvate synthase regulatory protein from Legionella pneumophila (strain Lens).